The chain runs to 467 residues: Heat shock factor protein 3 (467 aa).

The DNA-binding element occupies 16–121 (VPGFLAKLWA…LLENIKRKVS (106 aa)). The tract at residues 128 to 201 (LKVCAEDLHK…LSLMRGNYIV (74 aa)) is hydrophobic repeat HR-A/B. The interval 364-389 (IQDFLNCIDASLEELQAMLSGKQYSF) is hydrophobic repeat HR-C. The tract at residues 427–449 (EDLGASERETAGSKGGQEGTESC) is disordered.

Belongs to the HSF family. Homotrimer. As to expression, expressed in most tissues. High levels are found in erythrocytes and low levels in liver.

It localises to the cytoplasm. Its subcellular location is the nucleus. DNA-binding protein that specifically binds heat shock promoter elements (HSE) and activates transcription. HSF3 binds DNA constitutively only when the C-terminal region is deleted. This chain is Heat shock factor protein 3 (HSF3), found in Gallus gallus (Chicken).